The primary structure comprises 388 residues: Putative 8-amino-7-oxononanoate synthase (388 aa).

Arg18 lines the substrate pocket. 105 to 106 provides a ligand contact to pyridoxal 5'-phosphate; it reads GY. Residue His130 participates in substrate binding. Residues Ser176, 201–204, and 232–235 each bind pyridoxal 5'-phosphate; these read DDAH and TLSK. Lys235 is modified (N6-(pyridoxal phosphate)lysine). Thr349 is a substrate binding site.

The protein belongs to the class-II pyridoxal-phosphate-dependent aminotransferase family. BioF subfamily. As to quaternary structure, homodimer. Pyridoxal 5'-phosphate serves as cofactor.

The enzyme catalyses 6-carboxyhexanoyl-[ACP] + L-alanine + H(+) = (8S)-8-amino-7-oxononanoate + holo-[ACP] + CO2. It functions in the pathway cofactor biosynthesis; biotin biosynthesis. In terms of biological role, catalyzes the decarboxylative condensation of pimeloyl-[acyl-carrier protein] and L-alanine to produce 8-amino-7-oxononanoate (AON), [acyl-carrier protein], and carbon dioxide. The polypeptide is Putative 8-amino-7-oxononanoate synthase (bioF) (Acetivibrio thermocellus (strain ATCC 27405 / DSM 1237 / JCM 9322 / NBRC 103400 / NCIMB 10682 / NRRL B-4536 / VPI 7372) (Clostridium thermocellum)).